The chain runs to 288 residues: NGG1-interacting factor 3 (288 aa).

It belongs to the GTP cyclohydrolase I type 2/NIF3 family. May interact with NGG1.

Its subcellular location is the mitochondrion. The chain is NGG1-interacting factor 3 from Saccharomyces cerevisiae (strain ATCC 204508 / S288c) (Baker's yeast).